The following is a 396-amino-acid chain: 1-deoxy-D-xylulose 5-phosphate reductoisomerase (396 aa).

NADPH is bound by residues Thr10, Gly11, Ser12, Ile13, and Asn123. Residue Lys124 coordinates 1-deoxy-D-xylulose 5-phosphate. Position 125 (Glu125) interacts with NADPH. A Mn(2+)-binding site is contributed by Asp149. 1-deoxy-D-xylulose 5-phosphate contacts are provided by Ser150, Glu151, Ser185, and His208. Glu151 lines the Mn(2+) pocket. Gly214 provides a ligand contact to NADPH. The 1-deoxy-D-xylulose 5-phosphate site is built by Ser221, Asn226, Lys227, and Glu230. Glu230 contacts Mn(2+).

This sequence belongs to the DXR family. Mg(2+) serves as cofactor. Mn(2+) is required as a cofactor.

It carries out the reaction 2-C-methyl-D-erythritol 4-phosphate + NADP(+) = 1-deoxy-D-xylulose 5-phosphate + NADPH + H(+). It functions in the pathway isoprenoid biosynthesis; isopentenyl diphosphate biosynthesis via DXP pathway; isopentenyl diphosphate from 1-deoxy-D-xylulose 5-phosphate: step 1/6. Functionally, catalyzes the NADPH-dependent rearrangement and reduction of 1-deoxy-D-xylulose-5-phosphate (DXP) to 2-C-methyl-D-erythritol 4-phosphate (MEP). The polypeptide is 1-deoxy-D-xylulose 5-phosphate reductoisomerase (Shewanella frigidimarina (strain NCIMB 400)).